Here is a 657-residue protein sequence, read N- to C-terminus: Splicing factor Cactin (657 aa).

Residues 1–15 (MGKDSKKHKKERRRE) show a composition bias toward basic residues. 3 disordered regions span residues 1-83 (MGKD…EDTL), 369-406 (QESEELLPVAEVPPQVKIQKEEEEEEEEDEDDEKISKK), and 472-503 (ADVDNLTERRNRNRGTLPSSSAASSGAPQGAS). Coiled-coil stretches lie at residues 23-77 (SDEE…RKDA) and 352-403 (RLQL…DEKI). A compositionally biased stretch (basic and acidic residues) spans 26–60 (ERLQKRLAEQRSLKKDEKRRQKEEMKKNESAEEKR). Residues 61-72 (ARRMEKKMRKDA) show a composition bias toward basic residues. Residues 389–401 (EEEEEEEEDEDDE) show a composition bias toward acidic residues. Residues 489-503 (PSSSAASSGAPQGAS) show a composition bias toward low complexity.

It belongs to the CACTIN family. In terms of tissue distribution, expressed in pharynx, intestine, vulva and spermatheca (at protein level).

The protein localises to the nucleus. It is found in the cytoplasm. In terms of biological role, plays a role in pre-mRNA splicing by facilitating excision of a subset of introns. Plays a role during early embryonic development. Required for the distal tip cell migration at the end of larval development and for gonad morphogenesis. In Caenorhabditis elegans, this protein is Splicing factor Cactin (cacn-1).